The sequence spans 238 residues: NEDD4-binding protein 2-like 1 (238 aa).

2 disordered regions span residues 1-36 (MEDSFLESFGRLSLQQRQQQPPPRPPPARGPPPRRH) and 183-212 (VLHAEKPSRANRNQGRNSEPSSGSGYWNTY). The segment covering 20 to 31 (QPPPRPPPARGP) has biased composition (pro residues). A compositionally biased stretch (polar residues) spans 192–212 (ANRNQGRNSEPSSGSGYWNTY).

Interacts with dynactin subunit proteins, including DCTN4, DCTN5 and DCTN5.

Functionally, might play a role in adipocyte differentiation and triglyceride accumulation. This chain is NEDD4-binding protein 2-like 1 (N4bp2l1), found in Mus musculus (Mouse).